The sequence spans 395 residues: Acetate kinase (395 aa).

Position 8 (asparagine 8) interacts with Mg(2+). Lysine 15 provides a ligand contact to ATP. Position 89 (arginine 89) interacts with substrate. Aspartate 146 (proton donor/acceptor) is an active-site residue. Residues 206 to 210 (HLGNG), 281 to 283 (DLR), and 329 to 333 (GIGEN) each bind ATP. A Mg(2+)-binding site is contributed by glutamate 382.

The protein belongs to the acetokinase family. In terms of assembly, homodimer. Mg(2+) serves as cofactor. It depends on Mn(2+) as a cofactor.

Its subcellular location is the cytoplasm. It catalyses the reaction acetate + ATP = acetyl phosphate + ADP. It functions in the pathway metabolic intermediate biosynthesis; acetyl-CoA biosynthesis; acetyl-CoA from acetate: step 1/2. Its function is as follows. Catalyzes the formation of acetyl phosphate from acetate and ATP. Can also catalyze the reverse reaction. The chain is Acetate kinase from Shouchella clausii (strain KSM-K16) (Alkalihalobacillus clausii).